The following is a 564-amino-acid chain: Kelch-like protein 12 (564 aa).

The BTB domain occupies Cys-29–Val-96. One can recognise a BACK domain in the interval Cys-131–Ile-232. 6 Kelch repeats span residues Val-278–Asp-325, Val-327–Asp-375, Met-376–Gly-422, Leu-423–Asp-469, Ile-471–Gly-516, and Leu-518–Glu-563.

Component of the BCR(KLHL12) E3 ubiquitin ligase complex.

The protein resides in the cytoplasmic vesicle. Its subcellular location is the COPII-coated vesicle. It functions in the pathway protein modification; protein ubiquitination. Functionally, substrate-specific adapter of a BCR (BTB-CUL3-RBX1) E3 ubiquitin ligase complex that acts as a negative regulator of Wnt signaling pathway and ER-Golgi transport. The BCR(KLHL12) complex is involved in ER-Golgi transport by regulating the size of COPII coats, thereby playing a key role in collagen export, which is required for embryonic stem (ES) cells division. Negatively regulates the Wnt signaling pathway, possibly via the targeted ubiquitination and subsequent proteolysis of dvl2 and dvl3. Regulates convergent-extension movements during early embryonic development. This Danio rerio (Zebrafish) protein is Kelch-like protein 12 (klhl12).